The following is a 136-amino-acid chain: Lipoprotein YghG (136 aa).

The signal sequence occupies residues 1 to 24 (MSIKQMPGRVLISLLLSVTGLLSG). The N-palmitoyl cysteine moiety is linked to residue Cys25. Residue Cys25 is the site of S-diacylglycerol cysteine attachment.

The protein belongs to the GspS/AspS pilotin family.

It localises to the cell outer membrane. Involved in a type II secretion system (T2SS, formerly general secretion pathway, GSP) for the export of folded proteins across the outer membrane. In a functional T2SS this subunit helps assemble the outer membrane channel. This chain is Lipoprotein YghG (yghG), found in Escherichia coli (strain K12).